The primary structure comprises 176 residues: Large ribosomal subunit protein uL6 (176 aa).

It belongs to the universal ribosomal protein uL6 family. In terms of assembly, part of the 50S ribosomal subunit.

This protein binds to the 23S rRNA, and is important in its secondary structure. It is located near the subunit interface in the base of the L7/L12 stalk, and near the tRNA binding site of the peptidyltransferase center. The chain is Large ribosomal subunit protein uL6 from Burkholderia mallei (strain NCTC 10247).